The primary structure comprises 385 residues: MKFVDEATILAAAGDGGNGCVSFRREKYIPRGGPDGGDGGDGGDVWLLADENLNTLIDYRFEKNFRAERGQNGQSCDCTGKRGKDIIIKVPVGTRVLDSGTNEVMGDMTRHAQRLMVAKGGFHGLGNTRFKSSVNRAPRQKTGGTKGEIREIQLELMLLADVGMLGLPNAGKSTFIRAVSAAKPKVADYPFTTLVPSLGVVRMDNEQSFVVADIPGLIEGAADGAGLGIRFLKHLERCQVLLHLIDLAPVDESDPVENARIIVTELERYSENLASKPRWLVFNKADLLDPEEAASRANAIAKVLGWEEKYYLISAANRDGVKALCWDVMAFINAHPKEQAAPEAAPEKVEFMWDDYHRDQLQQEEAEETLDDDWDEDGVETIYQR.

The Obg domain maps to 1–159 (MKFVDEATIL…REIQLELMLL (159 aa)). An OBG-type G domain is found at 160-333 (ADVGMLGLPN…LCWDVMAFIN (174 aa)). GTP is bound by residues 166-173 (GLPNAGKS), 191-195 (FTTLV), 213-216 (DIPG), 283-286 (NKAD), and 314-316 (SAA). 2 residues coordinate Mg(2+): Ser173 and Thr193. Positions 362–379 (QQEEAEETLDDDWDEDGV) are enriched in acidic residues. The tract at residues 362–385 (QQEEAEETLDDDWDEDGVETIYQR) is disordered.

It belongs to the TRAFAC class OBG-HflX-like GTPase superfamily. OBG GTPase family. Monomer. Mg(2+) is required as a cofactor.

Its subcellular location is the cytoplasm. Its function is as follows. An essential GTPase which binds GTP, GDP and possibly (p)ppGpp with moderate affinity, with high nucleotide exchange rates and a fairly low GTP hydrolysis rate. Plays a role in control of the cell cycle, stress response, ribosome biogenesis and in those bacteria that undergo differentiation, in morphogenesis control. This is GTPase Obg from Sodalis glossinidius (strain morsitans).